Reading from the N-terminus, the 122-residue chain is uncharacterized protein (122 aa).

Residues methionine 1–arginine 15 show a composition bias toward basic and acidic residues. A disordered region spans residues methionine 1–threonine 26.

This is an uncharacterized protein from Macaca fascicularis (Crab-eating macaque).